The sequence spans 337 residues: Terpene cyclase (337 aa).

Residues 5–25 (ASVIFLSLSVLAAVGVWGPFV) traverse the membrane as a helical segment. The N-linked (GlcNAc...) asparagine glycan is linked to Asn-65. 7 helical membrane passes run 72–92 (IAYC…VILC), 111–131 (GLLS…MSFI), 149–169 (ALIL…LNVL), 177–197 (IWGI…ARII), 222–242 (VAGG…LGIF), 267–287 (LQVD…HELI), and 298–318 (LGGL…AAAW).

The protein belongs to the membrane-bound ascI terpene cyclase family.

The protein resides in the membrane. The protein operates within antifungal biosynthesis. Cyclase; part of the gene cluster that mediates the biosynthesis of the tetrahydropyranyl antifungal agent lanomycin that acts as an inhibitor of CYP51 and blocks the ergosterol biosynthesis. The biosynthesis probably begins with the formation of an hexaketide, followed by methionine mediated alkylation of C-2 and C-6, and methylation of the reduced C-3 oxygen, pyran forming reductive ring closure, oxygenation of C-4, beta-keto reduction, enoyl reduction and dehydration of the remaining oxygens, and finally, acylation with glycine to complete the biosynthesis. This chain is Terpene cyclase, found in Pyrenophora dematioidea (Helminthosporium dematioideum).